The chain runs to 656 residues: Chaperone protein DnaK (656 aa).

The residue at position 204 (Thr-204) is a Phosphothreonine; by autocatalysis. Residues 602 to 656 (KLAERVYAKKGGAAGAPPGGEAEGEPQAQAGGKKEDVVDAEFEEVKDEKKKDEDK) form a disordered region. Low complexity predominate over residues 620 to 632 (GGEAEGEPQAQAG). Residues 647–656 (KDEKKKDEDK) show a composition bias toward basic and acidic residues.

Belongs to the heat shock protein 70 family.

Functionally, acts as a chaperone. The protein is Chaperone protein DnaK of Coxiella burnetii (strain CbuG_Q212) (Coxiella burnetii (strain Q212)).